A 451-amino-acid chain; its full sequence is PTS system galactose-specific EIIC component (451 aa).

Residues 8 to 427 (LNKTLMPLAS…VLNVLIYYPF (420 aa)) form the PTS EIIC type-3 domain. 11 helical membrane passes run 40-60 (LGIA…VDFL), 69-89 (FSAV…YNFA), 104-124 (GLLS…VPVV), 151-171 (TGST…LVYI), 190-210 (VVDS…MFGI), 239-259 (ANPW…FFGI), 263-283 (LIGG…IDAY), 296-316 (IVFA…GLVI), 332-352 (LGAI…LPMM), 356-376 (LFFI…LGLA), and 403-423 (ISGG…NVLI).

The protein localises to the cell membrane. The phosphoenolpyruvate-dependent sugar phosphotransferase system (PTS), a major carbohydrate active transport system, catalyzes the phosphorylation of incoming sugar substrates concomitant with their translocation across the cell membrane. Involved in galactose transport with PtcA and PtcB. In Lactococcus lactis subsp. cremoris (strain MG1363), this protein is PTS system galactose-specific EIIC component.